The primary structure comprises 484 residues: Membrane-bound lytic murein transglycosylase F (484 aa).

The first 18 residues, 1 to 18 (MKGLLLRIIAAFALVLWA), serve as a signal peptide directing secretion. The segment at 19 to 267 (IDMVFPWQQM…RIEEKYFNHF (249 aa)) is non-LT domain. Positions 268–484 (SQFDYVDMRQ…PLTDNQEKQE (217 aa)) are LT domain. The active site involves Glu312. The interval 459 to 484 (ADNKDKPSETDENLPLPLTDNQEKQE) is disordered.

It in the N-terminal section; belongs to the bacterial solute-binding protein 3 family. This sequence in the C-terminal section; belongs to the transglycosylase Slt family.

The protein resides in the cell outer membrane. It catalyses the reaction Exolytic cleavage of the (1-&gt;4)-beta-glycosidic linkage between N-acetylmuramic acid (MurNAc) and N-acetylglucosamine (GlcNAc) residues in peptidoglycan, from either the reducing or the non-reducing ends of the peptidoglycan chains, with concomitant formation of a 1,6-anhydrobond in the MurNAc residue.. In terms of biological role, murein-degrading enzyme that degrades murein glycan strands and insoluble, high-molecular weight murein sacculi, with the concomitant formation of a 1,6-anhydromuramoyl product. Lytic transglycosylases (LTs) play an integral role in the metabolism of the peptidoglycan (PG) sacculus. Their lytic action creates space within the PG sacculus to allow for its expansion as well as for the insertion of various structures such as secretion systems and flagella. The chain is Membrane-bound lytic murein transglycosylase F from Mannheimia succiniciproducens (strain KCTC 0769BP / MBEL55E).